The following is a 30-amino-acid chain: MKAIMVLFYVMTLTIIGSFSMLLQKAKERQ.

The first 17 residues, 1–17, serve as a signal peptide directing secretion; the sequence is MKAIMVLFYVMTLTIIG.

As to quaternary structure, monomer. In terms of tissue distribution, expressed in venom sac and, to a lesser extent, in venom gland. Not expressed in brain.

Its subcellular location is the secreted. This chain is Ampulexin 3, found in Ampulex compressa (Emerald cockroach wasp).